We begin with the raw amino-acid sequence, 223 residues long: Alpha-S2-casein (223 aa).

The signal sequence occupies residues 1 to 15; it reads MKFFIFTCLLAVALA. A phosphoserine mark is found at Ser-23, Ser-24, Ser-25, Ser-72, Ser-73, Ser-74, Ser-77, Ser-145, Ser-147, Ser-151, and Ser-159. Positions 77-141 form a repeat; the sequence is SAEVAPEEVK…AGPFTPTVNR (65 aa). The stretch at residues 159–223 is a repeat; it reads STEVFTKKTK…TNAIPYVRYL (65 aa).

It belongs to the alpha-casein family. In terms of tissue distribution, mammary gland specific. Secreted in milk.

Its subcellular location is the secreted. In terms of biological role, important role in the capacity of milk to transport calcium phosphate. The sequence is that of Alpha-S2-casein (CSN1S2) from Ovis aries (Sheep).